A 158-amino-acid polypeptide reads, in one-letter code: Ecotin (158 aa).

Residues 1 to 21 (MRLLPLASVTLLSVLCAQAFA) form the signal peptide. Cysteines 67 and 104 form a disulfide.

This sequence belongs to the protease inhibitor I11 (ecotin) family. In terms of assembly, homodimer.

The protein resides in the periplasm. Its function is as follows. General inhibitor of family S1 serine proteases. This chain is Ecotin, found in Pseudomonas fluorescens (strain ATCC BAA-477 / NRRL B-23932 / Pf-5).